The chain runs to 311 residues: Phospholipid phosphatase 3 (311 aa).

The Cytoplasmic portion of the chain corresponds to M1–R33. Position 19 is a phosphoserine (S19). The chain crosses the membrane as a helical span at residues V34–I54. Topologically, residues E55–D85 are extracellular. The chain crosses the membrane as a helical span at residues A86–Y106. At R107–Y123 the chain is on the cytoplasmic side. The short motif at Y109–Y110 is the Dityrosine basolateral targeting motif element. Residues V124–F144 traverse the membrane as a helical segment. Residues T145–K194 are Extracellular-facing. The interval K149–P157 is phosphatase sequence motif I. N-linked (GlcNAc...) asparagine glycosylation is present at N171. The Integrin-binding motif motif lies at R183–E185. A helical membrane pass occupies residues S195 to L215. Residues F197–H200 are phosphatase sequence motif II. H200 (proton donors) is an active-site residue. Residues Q216–L226 lie on the Cytoplasmic side of the membrane. The helical transmembrane segment at L227–L244 threads the bilayer. The segment at S245 to D256 is phosphatase sequence motif III. Over S245–L258 the chain is Extracellular. Residue H252 is the Nucleophile of the active site. The chain crosses the membrane as a helical span at residues A259 to F279. A mediates interaction with CTNND1 region spans residues S276–V311. Over K280 to V311 the chain is Cytoplasmic.

It belongs to the PA-phosphatase related phosphoesterase family. As to quaternary structure, forms functional homodimers and homooligomers that are not required for substrate recognition and catalytic activity. Can also form heterooligomers with other PLPP2 and PLPP3. Interacts with CTNND1; negatively regulates the PLPP3-mediated stabilization of beta-catenin/CTNNB1. N-glycosylated. Contains high-mannose oligosaccharides.

It localises to the cell membrane. The protein resides in the basolateral cell membrane. The protein localises to the endoplasmic reticulum membrane. Its subcellular location is the endoplasmic reticulum-Golgi intermediate compartment membrane. It is found in the golgi apparatus membrane. It localises to the golgi apparatus. The protein resides in the trans-Golgi network membrane. The protein localises to the membrane raft. It catalyses the reaction a 1,2-diacyl-sn-glycero-3-phosphate + H2O = a 1,2-diacyl-sn-glycerol + phosphate. The enzyme catalyses 1,2-dihexadecanoyl-sn-glycero-3-phosphate + H2O = 1,2-dihexadecanoyl-sn-glycerol + phosphate. The catalysed reaction is 1,2-di-(9Z-octadecenoyl)-sn-glycero-3-phosphate + H2O = 1,2-di-(9Z-octadecenoyl)-sn-glycerol + phosphate. It carries out the reaction a monoacyl-sn-glycero-3-phosphate + H2O = a monoacylglycerol + phosphate. It catalyses the reaction (9Z)-octadecenoyl-sn-glycero-3-phosphate + H2O = (9Z-octadecenoyl)-glycerol + phosphate. The enzyme catalyses sphing-4-enine 1-phosphate + H2O = sphing-4-enine + phosphate. The catalysed reaction is an N-acylsphing-4-enine 1-phosphate + H2O = an N-acylsphing-4-enine + phosphate. It carries out the reaction N-(octanoyl)-sphing-4-enine-1-phosphate + H2O = N-octanoylsphing-4-enine + phosphate. It catalyses the reaction N-(9Z-octadecenoyl)-ethanolamine phosphate + H2O = N-(9Z-octadecenoyl) ethanolamine + phosphate. It functions in the pathway lipid metabolism; phospholipid metabolism. Its activity is regulated as follows. Magnesium-independent phospholipid phosphatase. Insensitive to N-ethylmaleimide. Inhibited by sphingosine, zinc ions and modestly by propanolol. In terms of biological role, magnesium-independent phospholipid phosphatase of the plasma membrane that catalyzes the dephosphorylation of a variety of glycerolipid and sphingolipid phosphate esters including phosphatidate/PA, lysophosphatidate/LPA, diacylglycerol pyrophosphate/DGPP, sphingosine 1-phosphate/S1P and ceramide 1-phosphate/C1P. Also acts on N-oleoyl ethanolamine phosphate/N-(9Z-octadecenoyl)-ethanolamine phosphate, a potential physiological compound. Has both an extracellular and an intracellular phosphatase activity, allowing the hydrolysis and the cellular uptake of these bioactive lipid mediators from the milieu, regulating signal transduction in different cellular processes. Through the dephosphorylation of extracellular sphingosine-1-phosphate and the regulation of its extra- and intracellular availability, plays a role in vascular homeostasis, regulating endothelial cell migration, adhesion, survival, proliferation and the production of pro-inflammatory cytokines. By maintaining the appropriate levels of this lipid in the cerebellum, also ensure its proper development and function. Through its intracellular lipid phosphatase activity may act in early compartments of the secretory pathway, regulating the formation of Golgi to endoplasmic reticulum retrograde transport carriers. Independently of this phosphatase activity may also function in the Wnt signaling pathway and the stabilization of beta-catenin/CTNNB1, thereby regulating cell proliferation, migration and differentiation in angiogenesis or yet in tumor growth. Also plays a role in integrin-mediated cell-cell adhesion in angiogenesis. This Bos taurus (Bovine) protein is Phospholipid phosphatase 3.